We begin with the raw amino-acid sequence, 163 residues long: Nucleotide-binding protein CJJ81176_0398 (163 aa).

Belongs to the YajQ family.

Functionally, nucleotide-binding protein. This Campylobacter jejuni subsp. jejuni serotype O:23/36 (strain 81-176) protein is Nucleotide-binding protein CJJ81176_0398.